Consider the following 238-residue polypeptide: Large ribosomal subunit protein uL1 (238 aa).

It belongs to the universal ribosomal protein uL1 family. Part of the 50S ribosomal subunit.

Its function is as follows. Binds directly to 23S rRNA. The L1 stalk is quite mobile in the ribosome, and is involved in E site tRNA release. Functionally, protein L1 is also a translational repressor protein, it controls the translation of the L11 operon by binding to its mRNA. The chain is Large ribosomal subunit protein uL1 from Rickettsia prowazekii (strain Madrid E).